The primary structure comprises 618 residues: 1-deoxy-D-xylulose-5-phosphate synthase (618 aa).

Thiamine diphosphate is bound by residues His-73 and 114–116 (GHS). Asp-145 is a Mg(2+) binding site. Residues 146–147 (GA), Asn-174, Tyr-284, and Glu-364 contribute to the thiamine diphosphate site. Asn-174 lines the Mg(2+) pocket.

This sequence belongs to the transketolase family. DXPS subfamily. In terms of assembly, homodimer. It depends on Mg(2+) as a cofactor. Thiamine diphosphate serves as cofactor.

The catalysed reaction is D-glyceraldehyde 3-phosphate + pyruvate + H(+) = 1-deoxy-D-xylulose 5-phosphate + CO2. The protein operates within metabolic intermediate biosynthesis; 1-deoxy-D-xylulose 5-phosphate biosynthesis; 1-deoxy-D-xylulose 5-phosphate from D-glyceraldehyde 3-phosphate and pyruvate: step 1/1. Catalyzes the acyloin condensation reaction between C atoms 2 and 3 of pyruvate and glyceraldehyde 3-phosphate to yield 1-deoxy-D-xylulose-5-phosphate (DXP). This chain is 1-deoxy-D-xylulose-5-phosphate synthase, found in Clostridium beijerinckii (strain ATCC 51743 / NCIMB 8052) (Clostridium acetobutylicum).